Here is a 104-residue protein sequence, read N- to C-terminus: Large ribosomal subunit protein uL24 (104 aa).

It belongs to the universal ribosomal protein uL24 family. As to quaternary structure, part of the 50S ribosomal subunit.

Functionally, one of two assembly initiator proteins, it binds directly to the 5'-end of the 23S rRNA, where it nucleates assembly of the 50S subunit. In terms of biological role, one of the proteins that surrounds the polypeptide exit tunnel on the outside of the subunit. This Buchnera aphidicola subsp. Schizaphis graminum (strain Sg) protein is Large ribosomal subunit protein uL24.